The following is a 218-amino-acid chain: Deoxyribose-phosphate aldolase (218 aa).

D89 acts as the Proton donor/acceptor in catalysis. Residue K152 is the Schiff-base intermediate with acetaldehyde of the active site. The active-site Proton donor/acceptor is K182.

It belongs to the DeoC/FbaB aldolase family. DeoC type 1 subfamily.

The protein resides in the cytoplasm. The catalysed reaction is 2-deoxy-D-ribose 5-phosphate = D-glyceraldehyde 3-phosphate + acetaldehyde. It participates in carbohydrate degradation; 2-deoxy-D-ribose 1-phosphate degradation; D-glyceraldehyde 3-phosphate and acetaldehyde from 2-deoxy-alpha-D-ribose 1-phosphate: step 2/2. In terms of biological role, catalyzes a reversible aldol reaction between acetaldehyde and D-glyceraldehyde 3-phosphate to generate 2-deoxy-D-ribose 5-phosphate. The chain is Deoxyribose-phosphate aldolase from Corynebacterium diphtheriae (strain ATCC 700971 / NCTC 13129 / Biotype gravis).